Reading from the N-terminus, the 325-residue chain is uncharacterized protein (325 aa).

A disordered region spans residues 296-325; that stretch reads QRTLSSSMEEADRPRRMSVTQPHLPPVPSA.

This sequence belongs to the NDRG family.

This is an uncharacterized protein from Caenorhabditis elegans.